Reading from the N-terminus, the 207-residue chain is Ribosome maturation factor RimP (207 aa).

Belongs to the RimP family.

It localises to the cytoplasm. Its function is as follows. Required for maturation of 30S ribosomal subunits. This Parvibaculum lavamentivorans (strain DS-1 / DSM 13023 / NCIMB 13966) protein is Ribosome maturation factor RimP.